We begin with the raw amino-acid sequence, 248 residues long: Anamorsin homolog (248 aa).

Residues 4–129 (FKGLQKSLYI…ETGSSARLSF (126 aa)) are N-terminal SAM-like domain. The linker stretch occupies residues 130 to 161 (AKKNASAVNVWKISGDDEELIDEEELLDEEDK). 4 residues coordinate [2Fe-2S] cluster: Cys172, Cys181, Cys184, and Cys186. The fe-S binding site A stretch occupies residues 172–186 (CSTTGKRKACKNCSC). 4 residues coordinate [4Fe-4S] cluster: Cys209, Cys212, Cys220, and Cys223. 2 short sequence motifs (cx2C motif) span residues 209–212 (CGNC) and 220–223 (CSTC). The interval 209 to 223 (CGNCYLGDAFRCSTC) is fe-S binding site B.

The protein belongs to the anamorsin family. Monomer. It depends on [2Fe-2S] cluster as a cofactor. [4Fe-4S] cluster is required as a cofactor.

It is found in the cytoplasm. It localises to the mitochondrion intermembrane space. Functionally, component of the cytosolic iron-sulfur (Fe-S) protein assembly (CIA) machinery. Required for the maturation of extramitochondrial Fe-S proteins. Part of an electron transfer chain functioning in an early step of cytosolic Fe-S biogenesis, facilitating the de novo assembly of a [4Fe-4S] cluster on the cytosolic Fe-S scaffold complex. Electrons are transferred from NADPH via a FAD- and FMN-containing diflavin oxidoreductase. Together with the diflavin oxidoreductase, also required for the assembly of the diferric tyrosyl radical cofactor of ribonucleotide reductase (RNR), probably by providing electrons for reduction during radical cofactor maturation in the catalytic small subunit. This Drosophila melanogaster (Fruit fly) protein is Anamorsin homolog.